The following is a 155-amino-acid chain: 6,7-dimethyl-8-ribityllumazine synthase (155 aa).

5-amino-6-(D-ribitylamino)uracil-binding positions include phenylalanine 22, 57 to 59 (AVE), and 81 to 83 (TVI). 86–87 (GT) contributes to the (2S)-2-hydroxy-3-oxobutyl phosphate binding site. Catalysis depends on histidine 89, which acts as the Proton donor. Residue phenylalanine 114 participates in 5-amino-6-(D-ribitylamino)uracil binding. Position 128 (arginine 128) interacts with (2S)-2-hydroxy-3-oxobutyl phosphate.

The protein belongs to the DMRL synthase family. As to quaternary structure, forms an icosahedral capsid composed of 60 subunits, arranged as a dodecamer of pentamers.

The catalysed reaction is (2S)-2-hydroxy-3-oxobutyl phosphate + 5-amino-6-(D-ribitylamino)uracil = 6,7-dimethyl-8-(1-D-ribityl)lumazine + phosphate + 2 H2O + H(+). Its pathway is cofactor biosynthesis; riboflavin biosynthesis; riboflavin from 2-hydroxy-3-oxobutyl phosphate and 5-amino-6-(D-ribitylamino)uracil: step 1/2. Functionally, catalyzes the formation of 6,7-dimethyl-8-ribityllumazine by condensation of 5-amino-6-(D-ribitylamino)uracil with 3,4-dihydroxy-2-butanone 4-phosphate. This is the penultimate step in the biosynthesis of riboflavin. The sequence is that of 6,7-dimethyl-8-ribityllumazine synthase from Psychromonas ingrahamii (strain DSM 17664 / CCUG 51855 / 37).